A 308-amino-acid polypeptide reads, in one-letter code: Tetraacyldisaccharide 4'-kinase (308 aa).

Serine 63–threonine 70 lines the ATP pocket.

The protein belongs to the LpxK family.

It carries out the reaction a lipid A disaccharide + ATP = a lipid IVA + ADP + H(+). It functions in the pathway glycolipid biosynthesis; lipid IV(A) biosynthesis; lipid IV(A) from (3R)-3-hydroxytetradecanoyl-[acyl-carrier-protein] and UDP-N-acetyl-alpha-D-glucosamine: step 6/6. Its function is as follows. Transfers the gamma-phosphate of ATP to the 4'-position of a tetraacyldisaccharide 1-phosphate intermediate (termed DS-1-P) to form tetraacyldisaccharide 1,4'-bis-phosphate (lipid IVA). In Campylobacter jejuni subsp. doylei (strain ATCC BAA-1458 / RM4099 / 269.97), this protein is Tetraacyldisaccharide 4'-kinase.